Reading from the N-terminus, the 57-residue chain is Serine protease inhibitor Kazal-type 1 (57 aa).

Residues 4-57 form the Kazal-like domain; the sequence is LQRQANCNLKVNGCNKIYNPICGSDGITYANECLLCLENKKRQTSILVEKSGPC. 3 cysteine pairs are disulfide-bonded: cysteine 10/cysteine 39, cysteine 17/cysteine 36, and cysteine 25/cysteine 57.

It is found in the secreted. Its function is as follows. Serine protease inhibitor which exhibits anti-trypsin activity. In the pancreas, protects against trypsin-catalyzed premature activation of zymogens. In terms of biological role, in the male reproductive tract, binds to sperm heads where it modulates sperm capacitance by inhibiting calcium uptake and nitrogen oxide (NO) production. The protein is Serine protease inhibitor Kazal-type 1 (SPINK1) of Canis lupus familiaris (Dog).